The chain runs to 272 residues: MICOS complex subunit MIC27 (272 aa).

A mitochondrion-targeting transit peptide spans 1-24 (MAAKVARLAAAASSLPFVCAVYAE). The Mitochondrial intermembrane portion of the chain corresponds to 28–107 (SKSQLVKPKQ…YVYLKNPPPD (80 aa)). A helical membrane pass occupies residues 108-126 (FLPRVGIITISGLAGVVLA). Over 127-134 (RKDSRFKK) the chain is Mitochondrial matrix. The chain crosses the membrane as a helical span at residues 135-152 (IAYPLGLTTLGISVCYPA). Topologically, residues 153–272 (QAVVIAKITG…EDVDMYSTRS (120 aa)) are mitochondrial intermembrane. The segment at 187–272 (SKLQQESKSV…EDVDMYSTRS (86 aa)) is disordered. Composition is skewed to polar residues over residues 188–198 (KLQQESKSVTQ) and 206–245 (ISNVQFESAIESRSSNRTESSPIESWSTKDPLPSSGTVKT).

It belongs to the apolipoprotein O/MICOS complex subunit Mic27 family. Component of the mitochondrial contact site and cristae organizing system (MICOS) complex (also known as MINOS or MitOS complex).

It is found in the mitochondrion inner membrane. Functionally, component of the MICOS complex, a large protein complex of the mitochondrial inner membrane that plays crucial roles in the maintenance of crista junctions, inner membrane architecture, and formation of contact sites to the outer membrane. This chain is MICOS complex subunit MIC27 (APOOL), found in Gallus gallus (Chicken).